The following is a 91-amino-acid chain: MTEQIDRYVSFRNVEWERRTAEVFALLQPHFDGSTSPFWDYFLRQRVIAHAQGLDDLRVLHNFLPTLKDLLEELDDERTLSRLEELEVLCM.

Belongs to the CowN family.

Functionally, is required to sustain N(2)-dependent growth in the presence of low levels of carbon monoxide (CO). Probably acts by protecting the N(2) fixation ability of the nitrogenase complex, which is inactivated in the presence of CO. In Gluconacetobacter diazotrophicus (strain ATCC 49037 / DSM 5601 / CCUG 37298 / CIP 103539 / LMG 7603 / PAl5), this protein is N(2)-fixation sustaining protein CowN.